A 521-amino-acid chain; its full sequence is Importin subunit alpha-3 (521 aa).

Ala-2 is modified (N-acetylalanine). Positions 2-58 (ADNEKLDNQRLKNFKNKGRDLETMRRQRNEVVVELRKNKRDEHLLKRRNVPHEDICE) constitute an IBB domain. A Nuclear localization signal motif is present at residues 43–52 (EHLLKRRNVP). Phosphoserine is present on Ser-60. An ARM 1; truncated repeat occupies 66 to 106 (YRVQNTSLEAIVQNASSDNQGIQLSAVQAARKLLSSDRNPP). ARM repeat units follow at residues 107-149 (IDDL…TSEQ), 150-194 (TQAV…CRDY), 195-233 (VISLGVVKPLLSFISPSIPITFLRNVTWVMVNLCRHKDP), 234-278 (PPPM…EQIQ), 279-318 (MVIDSGIVPHLVPLLSHQEVKVQTAALRAVGNIVTGTDEQ), 319-360 (TQVV…NQQQ), 361-400 (VQAVIDANLVPMIIHLLDKGDFGTQKEAAWAISNLTISGR), and 401-443 (KDQV…KMAE). The NLS binding site (major) stretch occupies residues 137 to 229 (WALTNIASGT…VTWVMVNLCR (93 aa)). Residues 306–394 (RAVGNIVTGT…QKEAAWAISN (89 aa)) form an NLS binding site (minor) region. One copy of the ARM 10; atypical repeat lies at 447–485 (ETIGNLIEECGGLEKIEQLQNHENEDIYKLAYEIIDQFF).

This sequence belongs to the importin alpha family. Forms a complex with importin subunit beta-1 (KPNB1). Interacts with SNAI1. Interacts with TALDO1 isoform 1. Interacts with CYB1. As to quaternary structure, (Microbial infection) Interacts with MERS virus protein OF4b; this interaction prevents the translocation of NF-kappa-B complex to the nucleus. In terms of assembly, (Microbial infection) Interacts with human adenovirus 5 E1A protein; this interaction allows E1A import into the host nucleus. (Microbial infection) Interacts with Chikungunya virus capsid protein; this interaction allows the nuclear import of the viral capsid protein. In terms of tissue distribution, highly expressed in testis, ovary, small intestine, heart, skeletal muscle, lung and pancreas, but barely detectable in kidney, thymus, colon and peripheral blood leukocytes.

It localises to the cytoplasm. The protein resides in the nucleus. Functions in nuclear protein import as an adapter protein for nuclear receptor KPNB1. Binds specifically and directly to substrates containing either a simple or bipartite NLS motif. Docking of the importin/substrate complex to the nuclear pore complex (NPC) is mediated by KPNB1 through binding to nucleoporin FxFG repeats and the complex is subsequently translocated through the pore by an energy requiring, Ran-dependent mechanism. At the nucleoplasmic side of the NPC, Ran binds to importin-beta and the three components separate and importin-alpha and -beta are re-exported from the nucleus to the cytoplasm where GTP hydrolysis releases Ran from importin. The directionality of nuclear import is thought to be conferred by an asymmetric distribution of the GTP- and GDP-bound forms of Ran between the cytoplasm and nucleus. Mediates nuclear import of AARS1, MRTFA and RANBP3. Its function is as follows. (Microbial infection) In vitro, mediates the nuclear import of human cytomegalovirus UL84 by recognizing a non-classical NLS. In vitro, mediates the nuclear import of human cytomegalovirus UL84 by recognizing a non-classical NLS. The polypeptide is Importin subunit alpha-3 (Homo sapiens (Human)).